A 198-amino-acid chain; its full sequence is Glycerol-3-phosphate acyltransferase (198 aa).

The next 5 membrane-spanning stretches (helical) occupy residues 2 to 22 (YAVL…AYIF), 48 to 70 (LGYK…AVLI), 75 to 97 (MGNT…PVFL), 111 to 131 (VVMT…VTVI), and 154 to 174 (IFWN…LAIF).

The protein belongs to the PlsY family. In terms of assembly, probably interacts with PlsX.

The protein resides in the cell membrane. The enzyme catalyses an acyl phosphate + sn-glycerol 3-phosphate = a 1-acyl-sn-glycero-3-phosphate + phosphate. It participates in lipid metabolism; phospholipid metabolism. Its function is as follows. Catalyzes the transfer of an acyl group from acyl-phosphate (acyl-PO(4)) to glycerol-3-phosphate (G3P) to form lysophosphatidic acid (LPA). This enzyme utilizes acyl-phosphate as fatty acyl donor, but not acyl-CoA or acyl-ACP. The polypeptide is Glycerol-3-phosphate acyltransferase (Thermoanaerobacter sp. (strain X514)).